The following is a 273-amino-acid chain: Large ribosomal subunit protein uL2 (273 aa).

Residues 221-263 (RGTAMNPVDHPHGGGEGRNFGKHPVSPWGLQTKGKKTRKNKRT) are disordered. The segment covering 253-263 (KGKKTRKNKRT) has biased composition (basic residues).

This sequence belongs to the universal ribosomal protein uL2 family. As to quaternary structure, part of the 50S ribosomal subunit. Forms a bridge to the 30S subunit in the 70S ribosome.

One of the primary rRNA binding proteins. Required for association of the 30S and 50S subunits to form the 70S ribosome, for tRNA binding and peptide bond formation. It has been suggested to have peptidyltransferase activity; this is somewhat controversial. Makes several contacts with the 16S rRNA in the 70S ribosome. The chain is Large ribosomal subunit protein uL2 from Buchnera aphidicola subsp. Baizongia pistaciae (strain Bp).